The chain runs to 72 residues: Protein SlyX (72 aa).

The disordered stretch occupies residues 53–72; the sequence is KSSQSSMLARPEDETPPPHY.

This sequence belongs to the SlyX family.

This chain is Protein SlyX, found in Proteus mirabilis (strain HI4320).